The sequence spans 90 residues: UPF0297 protein lwe1516 (90 aa).

This sequence belongs to the UPF0297 family.

In Listeria welshimeri serovar 6b (strain ATCC 35897 / DSM 20650 / CCUG 15529 / CIP 8149 / NCTC 11857 / SLCC 5334 / V8), this protein is UPF0297 protein lwe1516.